A 147-amino-acid polypeptide reads, in one-letter code: Large ribosomal subunit protein uL13 (147 aa).

The protein belongs to the universal ribosomal protein uL13 family. In terms of assembly, part of the 50S ribosomal subunit.

In terms of biological role, this protein is one of the early assembly proteins of the 50S ribosomal subunit, although it is not seen to bind rRNA by itself. It is important during the early stages of 50S assembly. This is Large ribosomal subunit protein uL13 from Mycolicibacterium smegmatis (strain ATCC 700084 / mc(2)155) (Mycobacterium smegmatis).